Reading from the N-terminus, the 432-residue chain is MSNVVIVGTQWGDEGKGKIVDLLTEQADMVVRFQGGHNAGHTLVVDGKKYILHLIPSGIIRPGKQCAIGNGVVLDPAALLAEMAKLAEVGVAISPENLKIADRTNLILPYHNALDQAREKKKGEEKKIGTTGRGIGPCYEDKSARRGIRLVDLYNPALFEEKLRENLDLVNFLLKNYYHEEGFQLADIRDDYLRMGDQLAPYCEDLAPWLEQAQAEGKNILFEGAQGALLDVDFGTYPFVTSSTTNASGACSGSGVAPGKLDYVLGIVKAYTTRVGSGPFPTELECADGQYLAKKGHEFGATTGRPRRCGWFDAVVVRHSARVSGLNGICITKLDVMDGMSEVRLCTGYRIDGKETAYVPADTAKLDRVEPIYETMPGWRESTVGCKNWQDLPAAAQAYLNRLVQVVGVPISILSTGPDRSETLIVQNPFHA.

GTP contacts are provided by residues 12-18 (GDEGKGK) and 40-42 (GHT). Asp-13 (proton acceptor) is an active-site residue. Mg(2+) contacts are provided by Asp-13 and Gly-40. IMP is bound by residues 13 to 16 (DEGK), 38 to 41 (NAGH), Thr-131, Arg-145, Gln-226, Thr-241, and Arg-305. His-41 serves as the catalytic Proton donor. Residue 301–307 (ATTGRPR) participates in substrate binding. GTP is bound by residues Arg-307, 333-335 (KLD), and 415-417 (STG).

Belongs to the adenylosuccinate synthetase family. In terms of assembly, homodimer. The cofactor is Mg(2+).

Its subcellular location is the cytoplasm. It catalyses the reaction IMP + L-aspartate + GTP = N(6)-(1,2-dicarboxyethyl)-AMP + GDP + phosphate + 2 H(+). The protein operates within purine metabolism; AMP biosynthesis via de novo pathway; AMP from IMP: step 1/2. Functionally, plays an important role in the de novo pathway of purine nucleotide biosynthesis. Catalyzes the first committed step in the biosynthesis of AMP from IMP. In Magnetococcus marinus (strain ATCC BAA-1437 / JCM 17883 / MC-1), this protein is Adenylosuccinate synthetase.